The chain runs to 166 residues: Large ribosomal subunit protein uL10 (166 aa).

This sequence belongs to the universal ribosomal protein uL10 family. Part of the ribosomal stalk of the 50S ribosomal subunit. The N-terminus interacts with L11 and the large rRNA to form the base of the stalk. The C-terminus forms an elongated spine to which L12 dimers bind in a sequential fashion forming a multimeric L10(L12)X complex.

Its function is as follows. Forms part of the ribosomal stalk, playing a central role in the interaction of the ribosome with GTP-bound translation factors. This chain is Large ribosomal subunit protein uL10, found in Azotobacter vinelandii (strain DJ / ATCC BAA-1303).